Consider the following 459-residue polypeptide: Cobyrinate a,c-diamide synthase (459 aa).

One can recognise a GATase cobBQ-type domain in the interval 252–446 (TLALADDEAF…LHVHFAQRPE (195 aa)). Cysteine 334 functions as the Nucleophile in the catalytic mechanism.

It belongs to the CobB/CbiA family. As to quaternary structure, monomer. Mg(2+) is required as a cofactor.

The enzyme catalyses cob(II)yrinate + 2 L-glutamine + 2 ATP + 2 H2O = cob(II)yrinate a,c diamide + 2 L-glutamate + 2 ADP + 2 phosphate + 2 H(+). Its pathway is cofactor biosynthesis; adenosylcobalamin biosynthesis; cob(II)yrinate a,c-diamide from sirohydrochlorin (anaerobic route): step 10/10. Its function is as follows. Catalyzes the ATP-dependent amidation of the two carboxylate groups at positions a and c of cobyrinate, using either L-glutamine or ammonia as the nitrogen source. Is able to use other nucleotide triphosphates as substrate, such as GTP or UTP, although less efficiently than ATP. The protein is Cobyrinate a,c-diamide synthase of Salmonella typhimurium (strain LT2 / SGSC1412 / ATCC 700720).